We begin with the raw amino-acid sequence, 256 residues long: Thiazole synthase (256 aa).

The active-site Schiff-base intermediate with DXP is lysine 95. 1-deoxy-D-xylulose 5-phosphate-binding positions include glycine 156, 182–183 (AG), and 204–205 (NT).

The protein belongs to the ThiG family. In terms of assembly, homotetramer. Forms heterodimers with either ThiH or ThiS.

The protein localises to the cytoplasm. It carries out the reaction [ThiS sulfur-carrier protein]-C-terminal-Gly-aminoethanethioate + 2-iminoacetate + 1-deoxy-D-xylulose 5-phosphate = [ThiS sulfur-carrier protein]-C-terminal Gly-Gly + 2-[(2R,5Z)-2-carboxy-4-methylthiazol-5(2H)-ylidene]ethyl phosphate + 2 H2O + H(+). It functions in the pathway cofactor biosynthesis; thiamine diphosphate biosynthesis. In terms of biological role, catalyzes the rearrangement of 1-deoxy-D-xylulose 5-phosphate (DXP) to produce the thiazole phosphate moiety of thiamine. Sulfur is provided by the thiocarboxylate moiety of the carrier protein ThiS. In vitro, sulfur can be provided by H(2)S. The protein is Thiazole synthase of Escherichia coli O6:H1 (strain CFT073 / ATCC 700928 / UPEC).